The following is a 119-amino-acid chain: MQSLDPLFARLSRSKFRSRFRLGMKERQYCLEKGAPVIEQHAADFVAKRLAPALPANDGKQTPMRGHPVFIAQHATATCCRGCLAKWHNIPQGVSLSEEQQRYIVAVIYHWLVVQMNQP.

This is an uncharacterized protein from Escherichia coli (strain K12).